Reading from the N-terminus, the 1204-residue chain is MGENPAKSHYAQLNLGEENEMEIFGYKTQCCRKALCIAGYILSCGALLLLFYWKPEWDVWANCVPCSLEEADVVLLRTTDEFRIYSRKNVTWISVSGIIKSRLDYPSFAEEDSIFSKALMKPSLQVKSIQVQKIRYVWNIYAKQFQKVGALEDHHTCSAIHTKFGSGLTCSEQSLRRVICGPNTIDVPVIPIWKLLIKEVLNPFYVFQLFSVCLWFAEDYMEYAAAIIIMSPLSISLTVYDLRQQSVKLQRLVESHNSIMVTGRNKEGFQELESHHLVPGDMVVLKEGKALLPCDAILISGQCIVNESMLTGESIPVTKTQLPQADNLKPWKMHCAEDYKKHVLFCGTEVIQTKGDDRGVVKAVVLQTGFNTAKGDLVRSILYPKPMNFRLYRDALRFLMCLIAFAAIGMIYTVCVFALNGEEAGEVVKKALDVITIAVPPALPAALTTGIIYTQRRLKKKGIFCISPQRINMCGQLNLICFDKTGTLTEDGLDLWGLLPSEGNCFQDVRRFPADHSLPWGPAFRAMVVCHSLIVLEGKIQGDPLDVKMFEATNWVIDDSSGHQIEGQRSTHATVIRPGPKANTASVDGITILHQFPFSSALQRMSVIAQETGGEKQAFTKGAPEMVATLCRAETVPSNFESKLLFYTAQGFRVIGLAYKSLQSGKQSTDLTREEVESDLTFLGLLIMENRLKRETKPVLEELSAAHIRSVMVTGDNIQTAVTVAKNAGMISPTNRVILVEANKIPGSFSASVTWKPLKENKTEDDGNLDSGSQTGRRIRLAAEPGQFHFAMSGKSYQVVAQYFSHLLPKLLLNATVFARMSPSQKSSLVEEFQKLDYFVGMCGDGANDCGALKVAHAGISLSEQEASVASPFTSRTPSIACVPELIREGRAALVTSFCMFKYMALYSTIQYLGVLLLYWQLNSFGNYQFLFQDLAITTVIGMTMSFTEAYPKLVPYRPPSQLVSPPLLLSVILNILFSLGMQILGFLMVQKQPWYSKTDIHSACLSVNNHVENSSSASSLGLHGVGGGDPTEVDNGYKSYENTTVWLLSTINCLIIALVFSKGKPFRQPIYTNYVFIMVLVGQLGVCLFLVFADIDDLYSKMDLVCTPTTWRISMVMMLAVTLAVSFLVEEAIIENRALWLWLKKTFQYHSKSHYKRLQRVLEQDSAWPPLNETFSLDAVTVSVEEDMEGHSNPTFDSNEDAL.

At 1–32 (MGENPAKSHYAQLNLGEENEMEIFGYKTQCCR) the chain is on the cytoplasmic side. The helical transmembrane segment at 33-53 (KALCIAGYILSCGALLLLFYW) threads the bilayer. Residues 54 to 219 (KPEWDVWANC…FSVCLWFAED (166 aa)) are Extracellular-facing. Residues 220–242 (YMEYAAAIIIMSPLSISLTVYDL) form a helical membrane-spanning segment. Residues 243–397 (RQQSVKLQRL…NFRLYRDALR (155 aa)) are Cytoplasmic-facing. A helical membrane pass occupies residues 398-418 (FLMCLIAFAAIGMIYTVCVFA). The Extracellular segment spans residues 419 to 433 (LNGEEAGEVVKKALD). Residues 434–454 (VITIAVPPALPAALTTGIIYT) form a helical membrane-spanning segment. The Cytoplasmic portion of the chain corresponds to 455–897 (QRRLKKKGIF…REGRAALVTS (443 aa)). Asp-483 (4-aspartylphosphate intermediate) is an active-site residue. Mg(2+) is bound by residues Asp-845 and Asp-849. The helical transmembrane segment at 898–918 (FCMFKYMALYSTIQYLGVLLL) threads the bilayer. Topologically, residues 919-929 (YWQLNSFGNYQ) are extracellular. The helical transmembrane segment at 930–950 (FLFQDLAITTVIGMTMSFTEA) threads the bilayer. Residues 951-967 (YPKLVPYRPPSQLVSPP) lie on the Cytoplasmic side of the membrane. The chain crosses the membrane as a helical span at residues 968–988 (LLLSVILNILFSLGMQILGFL). Residues 989 to 1043 (MVQKQPWYSKTDIHSACLSVNNHVENSSSASSLGLHGVGGGDPTEVDNGYKSYEN) are Extracellular-facing. The chain crosses the membrane as a helical span at residues 1044–1064 (TTVWLLSTINCLIIALVFSKG). The Cytoplasmic segment spans residues 1065-1075 (KPFRQPIYTNY). The helical transmembrane segment at 1076–1096 (VFIMVLVGQLGVCLFLVFADI) threads the bilayer. At 1097–1113 (DDLYSKMDLVCTPTTWR) the chain is on the extracellular side. Residues 1114–1134 (ISMVMMLAVTLAVSFLVEEAI) form a helical membrane-spanning segment. Residues 1135 to 1204 (IENRALWLWL…PTFDSNEDAL (70 aa)) lie on the Cytoplasmic side of the membrane.

Belongs to the cation transport ATPase (P-type) (TC 3.A.3) family. Type V subfamily.

Its subcellular location is the membrane. The enzyme catalyses ATP + H2O = ADP + phosphate + H(+). This Gallus gallus (Chicken) protein is Probable cation-transporting ATPase 13A4 (ATP13A4).